A 146-amino-acid chain; its full sequence is Large-conductance mechanosensitive channel (146 aa).

Transmembrane regions (helical) follow at residues 17-37 (IDLAVGVIIGGAFGKIVDSLV), 40-60 (IIMPLITVITGGGVDFTQKFV), and 89-109 (LTILINFIILAWVVFLMVKLI).

Belongs to the MscL family. Homopentamer.

Its subcellular location is the cell inner membrane. Channel that opens in response to stretch forces in the membrane lipid bilayer. May participate in the regulation of osmotic pressure changes within the cell. The chain is Large-conductance mechanosensitive channel from Acinetobacter baylyi (strain ATCC 33305 / BD413 / ADP1).